A 192-amino-acid polypeptide reads, in one-letter code: Peptidyl-tRNA hydrolase (192 aa).

Y14 lines the tRNA pocket. Residue H19 is the Proton acceptor of the active site. Y64, N66, and N112 together coordinate tRNA.

This sequence belongs to the PTH family. In terms of assembly, monomer.

Its subcellular location is the cytoplasm. The catalysed reaction is an N-acyl-L-alpha-aminoacyl-tRNA + H2O = an N-acyl-L-amino acid + a tRNA + H(+). In terms of biological role, hydrolyzes ribosome-free peptidyl-tRNAs (with 1 or more amino acids incorporated), which drop off the ribosome during protein synthesis, or as a result of ribosome stalling. Functionally, catalyzes the release of premature peptidyl moieties from peptidyl-tRNA molecules trapped in stalled 50S ribosomal subunits, and thus maintains levels of free tRNAs and 50S ribosomes. In Prosthecochloris aestuarii (strain DSM 271 / SK 413), this protein is Peptidyl-tRNA hydrolase.